The following is a 162-amino-acid chain: Ribosome maturation factor RimP (162 aa).

It belongs to the RimP family.

Its subcellular location is the cytoplasm. Functionally, required for maturation of 30S ribosomal subunits. The sequence is that of Ribosome maturation factor RimP from Ralstonia nicotianae (strain ATCC BAA-1114 / GMI1000) (Ralstonia solanacearum).